The following is a 234-amino-acid chain: Adenosine 5'-phosphosulfate reductase (234 aa).

[4Fe-4S] cluster is bound by residues C120, C121, C203, and C206. The active-site Nucleophile; cysteine thiosulfonate intermediate is the C229.

This sequence belongs to the PAPS reductase family. CysH subfamily. [4Fe-4S] cluster serves as cofactor.

The protein localises to the cytoplasm. The catalysed reaction is [thioredoxin]-disulfide + sulfite + AMP + 2 H(+) = adenosine 5'-phosphosulfate + [thioredoxin]-dithiol. The protein operates within sulfur metabolism; hydrogen sulfide biosynthesis; sulfite from sulfate. Functionally, catalyzes the formation of sulfite from adenosine 5'-phosphosulfate (APS) using thioredoxin as an electron donor. This chain is Adenosine 5'-phosphosulfate reductase, found in Bacillus cereus (strain ATCC 14579 / DSM 31 / CCUG 7414 / JCM 2152 / NBRC 15305 / NCIMB 9373 / NCTC 2599 / NRRL B-3711).